A 353-amino-acid polypeptide reads, in one-letter code: Paraneoplastic antigen Ma1 homolog (353 aa).

It belongs to the PNMA family. As to expression, predominantly expressed in testis. Very low levels in the brain, including in the piriform cortex, hippocampus and some subcortical nuclei.

It is found in the nucleus. It localises to the nucleolus. The sequence is that of Paraneoplastic antigen Ma1 homolog (Pnma1) from Mus musculus (Mouse).